The primary structure comprises 372 residues: sn-glycerol-3-phosphate import ATP-binding protein UgpC (372 aa).

The region spanning 2–233 (LDIQQLVKTY…PASTFVASFI (232 aa)) is the ABC transporter domain. 35–42 (GPSGCGKS) is a binding site for ATP.

Belongs to the ABC transporter superfamily. sn-glycerol-3-phosphate importer (TC 3.A.1.1.3) family. As to quaternary structure, the complex is composed of two ATP-binding proteins (UgpC), two transmembrane proteins (UgpA and UgpE) and a solute-binding protein (UgpB).

It is found in the cell inner membrane. The enzyme catalyses sn-glycerol 3-phosphate(out) + ATP + H2O = sn-glycerol 3-phosphate(in) + ADP + phosphate + H(+). Functionally, part of the ABC transporter complex UgpBAEC involved in sn-glycerol-3-phosphate (G3P) import. Responsible for energy coupling to the transport system. The protein is sn-glycerol-3-phosphate import ATP-binding protein UgpC of Vibrio vulnificus (strain CMCP6).